The following is a 435-amino-acid chain: Homogentisate 1,2-dioxygenase (435 aa).

Catalysis depends on His-289, which acts as the Proton acceptor. Residues His-332 and Glu-338 each coordinate Fe cation. Tyr-347 and His-368 together coordinate homogentisate. A Fe cation-binding site is contributed by His-368.

Belongs to the homogentisate dioxygenase family. As to quaternary structure, hexamer; dimer of trimers. The cofactor is Fe cation.

The enzyme catalyses homogentisate + O2 = 4-maleylacetoacetate + H(+). It functions in the pathway amino-acid degradation; L-phenylalanine degradation; acetoacetate and fumarate from L-phenylalanine: step 4/6. Its function is as follows. Involved in the catabolism of homogentisate (2,5-dihydroxyphenylacetate or 2,5-OH-PhAc), a central intermediate in the degradation of phenylalanine and tyrosine. Catalyzes the oxidative ring cleavage of the aromatic ring of homogentisate to yield maleylacetoacetate. In Pseudomonas savastanoi pv. phaseolicola (strain 1448A / Race 6) (Pseudomonas syringae pv. phaseolicola (strain 1448A / Race 6)), this protein is Homogentisate 1,2-dioxygenase.